The following is a 448-amino-acid chain: Protein EVI2B (448 aa).

The signal sequence occupies residues 1-21 (MDPKYFILILFCGHLNNTFFS). N-linked (GlcNAc...) asparagine glycosylation is found at N16 and N50. Over 22–202 (KTETITTEKQ…QTPQKNNYNS (181 aa)) the chain is Extracellular. The interval 74 to 108 (AKVTAGQPTPAVYTSSEKPEAHTSAGQPLAYNTKQ) is disordered. The segment covering 97 to 108 (SAGQPLAYNTKQ) has biased composition (polar residues). N-linked (GlcNAc...) asparagine glycosylation occurs at N114. Residues 203 to 226 (IAAILIGVLLTSMLVAIIIIVLWK) form a helical membrane-spanning segment. The Cytoplasmic portion of the chain corresponds to 227–448 (CLRKPVLNDQ…SLPPPPAELL (222 aa)). A Phosphothreonine modification is found at T249. 4 positions are modified to phosphoserine: S268, S271, S278, and S294. Disordered stretches follow at residues 298-372 (IEDS…DSTS) and 427-448 (SIPPNSDQDLNESLPPPPAELL). Polar residues-rich tracts occupy residues 313-333 (VNGTSEDSADGSTVGTAVSSS) and 350-372 (QESNQSDKPTMTIVSPLPNDSTS).

Bone marrow, peripheral blood mononuclear cells, fibroblasts and Epstein-Barr virus-transformed lymphoblastoid cell lines. Strongly expressed in granulocytic cells, and weakly on lymphocytes cells.

It localises to the membrane. Required for granulocyte differentiation and functionality of hematopoietic progenitor cells through the control of cell cycle progression and survival of hematopoietic progenitor cells. This Homo sapiens (Human) protein is Protein EVI2B.